The sequence spans 114 residues: Small ribosomal subunit protein bS6 (114 aa).

The protein belongs to the bacterial ribosomal protein bS6 family.

Binds together with bS18 to 16S ribosomal RNA. This chain is Small ribosomal subunit protein bS6, found in Bacteroides fragilis (strain YCH46).